The following is a 218-amino-acid chain: Hypoxanthine-guanine phosphoribosyltransferase (218 aa).

An N-acetylalanine modification is found at A2. A GMP-binding site is contributed by K69. K103 is subject to N6-acetyllysine. K115 is covalently cross-linked (Glycyl lysine isopeptide (Lys-Gly) (interchain with G-Cter in SUMO1); alternate). K115 participates in a covalent cross-link: Glycyl lysine isopeptide (Lys-Gly) (interchain with G-Cter in SUMO2); alternate. Residues 134 to 142, K166, 186 to 188, and D194 each bind GMP; these read EDIIDTGKT and KFV. D138 serves as the catalytic Proton acceptor. T142 is subject to Phosphothreonine. D194 provides a ligand contact to Mg(2+).

Belongs to the purine/pyrimidine phosphoribosyltransferase family. As to quaternary structure, homotetramer. The cofactor is Mg(2+).

The protein localises to the cytoplasm. It catalyses the reaction IMP + diphosphate = hypoxanthine + 5-phospho-alpha-D-ribose 1-diphosphate. It carries out the reaction GMP + diphosphate = guanine + 5-phospho-alpha-D-ribose 1-diphosphate. The protein operates within purine metabolism; IMP biosynthesis via salvage pathway; IMP from hypoxanthine: step 1/1. Converts guanine to guanosine monophosphate, and hypoxanthine to inosine monophosphate. Transfers the 5-phosphoribosyl group from 5-phosphoribosylpyrophosphate onto the purine. Plays a central role in the generation of purine nucleotides through the purine salvage pathway. This Pan troglodytes (Chimpanzee) protein is Hypoxanthine-guanine phosphoribosyltransferase (HPRT1).